The chain runs to 484 residues: Glutamate--tRNA ligase (484 aa).

The 'HIGH' region motif lies at 11-21 (PSPTGYLHIGN). Residues 252–256 (KLSKR) carry the 'KMSKS' region motif. K255 lines the ATP pocket.

The protein belongs to the class-I aminoacyl-tRNA synthetase family. Glutamate--tRNA ligase type 1 subfamily. As to quaternary structure, monomer.

Its subcellular location is the cytoplasm. The enzyme catalyses tRNA(Glu) + L-glutamate + ATP = L-glutamyl-tRNA(Glu) + AMP + diphosphate. Functionally, catalyzes the attachment of glutamate to tRNA(Glu) in a two-step reaction: glutamate is first activated by ATP to form Glu-AMP and then transferred to the acceptor end of tRNA(Glu). The polypeptide is Glutamate--tRNA ligase (Staphylococcus aureus (strain MRSA252)).